The chain runs to 137 residues: Drosulfakinins (137 aa).

The N-terminal stretch at 1–31 (MGLRSCTHFATLVIPLWALAFCFLVVVPVPA) is a signal peptide. Residues 32-74 (QTNLQTSKGDRRLQDLESNMGAESDQPNANLVRPSLSRFGDKR) constitute a propeptide that is removed on maturation. Phe81 is modified (phenylalanine amide). A propeptide spanning residues 85-107 (VPRPMIPIELDLLMDNDDENTKA) is cleaved from the precursor. Sulfotyrosine is present on Tyr113. A Phenylalanine amide modification is found at Phe118. Tyr130 bears the Sulfotyrosine mark. Phenylalanine amide is present on Phe135.

Belongs to the gastrin/cholecystokinin family.

The protein localises to the secreted. Functionally, drosulfakinin-0 (DSK 0) plays diverse biological roles including regulating gut muscle contraction in adults but not in larvae. The protein is Drosulfakinins of Drosophila yakuba (Fruit fly).